Reading from the N-terminus, the 165-residue chain is Phosphopantetheine adenylyltransferase (165 aa).

Serine 8 is a substrate binding site. ATP contacts are provided by residues 8-9 (SF) and histidine 16. Substrate-binding residues include lysine 40, threonine 72, and arginine 86. Residues 87-89 (GLR), glutamate 97, and 122-128 (YSFLSSS) each bind ATP.

This sequence belongs to the bacterial CoaD family. Homohexamer. Mg(2+) is required as a cofactor.

The protein localises to the cytoplasm. The enzyme catalyses (R)-4'-phosphopantetheine + ATP + H(+) = 3'-dephospho-CoA + diphosphate. The protein operates within cofactor biosynthesis; coenzyme A biosynthesis; CoA from (R)-pantothenate: step 4/5. Reversibly transfers an adenylyl group from ATP to 4'-phosphopantetheine, yielding dephospho-CoA (dPCoA) and pyrophosphate. This chain is Phosphopantetheine adenylyltransferase, found in Synechococcus sp. (strain WH7803).